The following is a 454-amino-acid chain: Bifunctional protein GlmU (454 aa).

Residues 1 to 226 are pyrophosphorylase; the sequence is MALNVVILAA…AVEVEGANNR (226 aa). Residues 8–11, K22, Q73, 78–79, 100–102, G137, E151, N166, and N224 contribute to the UDP-N-acetyl-alpha-D-glucosamine site; these read LAAG, GT, and YGD. D102 provides a ligand contact to Mg(2+). Mg(2+) is bound at residue N224. A linker region spans residues 227 to 247; sequence VQLAQLERAYQARAAEKLMLE. The N-acetyltransferase stretch occupies residues 248 to 454; the sequence is GANLRDPARI…GWPRPVKLKK (207 aa). R330 and K348 together coordinate UDP-N-acetyl-alpha-D-glucosamine. H360 serves as the catalytic Proton acceptor. UDP-N-acetyl-alpha-D-glucosamine is bound by residues Y363 and N374. Acetyl-CoA-binding positions include A377, 383–384, S402, A420, and R437; that span reads NY.

This sequence in the N-terminal section; belongs to the N-acetylglucosamine-1-phosphate uridyltransferase family. In the C-terminal section; belongs to the transferase hexapeptide repeat family. As to quaternary structure, homotrimer. Requires Mg(2+) as cofactor.

Its subcellular location is the cytoplasm. It carries out the reaction alpha-D-glucosamine 1-phosphate + acetyl-CoA = N-acetyl-alpha-D-glucosamine 1-phosphate + CoA + H(+). The enzyme catalyses N-acetyl-alpha-D-glucosamine 1-phosphate + UTP + H(+) = UDP-N-acetyl-alpha-D-glucosamine + diphosphate. Its pathway is nucleotide-sugar biosynthesis; UDP-N-acetyl-alpha-D-glucosamine biosynthesis; N-acetyl-alpha-D-glucosamine 1-phosphate from alpha-D-glucosamine 6-phosphate (route II): step 2/2. It participates in nucleotide-sugar biosynthesis; UDP-N-acetyl-alpha-D-glucosamine biosynthesis; UDP-N-acetyl-alpha-D-glucosamine from N-acetyl-alpha-D-glucosamine 1-phosphate: step 1/1. It functions in the pathway bacterial outer membrane biogenesis; LPS lipid A biosynthesis. In terms of biological role, catalyzes the last two sequential reactions in the de novo biosynthetic pathway for UDP-N-acetylglucosamine (UDP-GlcNAc). The C-terminal domain catalyzes the transfer of acetyl group from acetyl coenzyme A to glucosamine-1-phosphate (GlcN-1-P) to produce N-acetylglucosamine-1-phosphate (GlcNAc-1-P), which is converted into UDP-GlcNAc by the transfer of uridine 5-monophosphate (from uridine 5-triphosphate), a reaction catalyzed by the N-terminal domain. The chain is Bifunctional protein GlmU from Shewanella pealeana (strain ATCC 700345 / ANG-SQ1).